The sequence spans 251 residues: Prolactin-7B1 (251 aa).

The N-terminal stretch at methionine 1–serine 29 is a signal peptide. Residues asparagine 2 and asparagine 73 are each glycosylated (N-linked (GlcNAc...) asparagine). 2 cysteine pairs are disulfide-bonded: cysteine 100–cysteine 216 and cysteine 233–cysteine 241.

It belongs to the somatotropin/prolactin family. As to expression, expression restricted to placenta. Abundantly expressed in trophoblast cells of the junctional zone and trophoblasts migrating into the mesometrial decidua.

The protein localises to the secreted. The sequence is that of Prolactin-7B1 (Prl7b1) from Mus musculus (Mouse).